The following is a 212-amino-acid chain: NAD(P)H-hydrate epimerase (212 aa).

One can recognise a YjeF N-terminal domain in the interval methionine 11–aspartate 212. Asparagine 60 to aspartate 64 provides a ligand contact to (6S)-NADPHX. 2 residues coordinate K(+): asparagine 61 and aspartate 123. (6S)-NADPHX-binding positions include glycine 127 to alanine 133, tyrosine 138, and aspartate 156. Serine 159 is a binding site for K(+).

It belongs to the NnrE/AIBP family. It depends on K(+) as a cofactor.

The catalysed reaction is (6R)-NADHX = (6S)-NADHX. It carries out the reaction (6R)-NADPHX = (6S)-NADPHX. Catalyzes the epimerization of the S- and R-forms of NAD(P)HX, a damaged form of NAD(P)H that is a result of enzymatic or heat-dependent hydration. This is a prerequisite for the S-specific NAD(P)H-hydrate dehydratase to allow the repair of both epimers of NAD(P)HX. The polypeptide is NAD(P)H-hydrate epimerase (Limosilactobacillus reuteri (strain DSM 20016) (Lactobacillus reuteri)).